The primary structure comprises 363 residues: Type-2 angiotensin II receptor (363 aa).

Over 1-45 the chain is Extracellular; the sequence is MKDNFSFAATSRNITSSRPFDNLNATGTNESAFNCSHKPSDKHLE. Residues Asn4, Asn13, Asn24, Asn29, and Asn34 are each glycosylated (N-linked (GlcNAc...) asparagine). Intrachain disulfides connect Cys35–Cys290 and Cys117–Cys195. A helical transmembrane segment spans residues 46–70; that stretch reads AIPVLYYMIFVIGFAVNIVVVSLFC. Residues 71–80 are Cytoplasmic-facing; sequence CQKGPKKVSS. Residues 81–104 traverse the membrane as a helical segment; the sequence is IYIFNLALADLLLLATLPLWATYY. The angiotensin II site is built by Tyr103 and Tyr104. Over 105 to 114 the chain is Extracellular; sequence SYRYDWLFGP. The helical transmembrane segment at 115–140 threads the bilayer; it reads VMCKVFGSFLTLNMFASIFFITCMSV. Residues 141–159 are Cytoplasmic-facing; the sequence is DRYQSVIYPFLSQRRNPWQ. A helical transmembrane segment spans residues 160–181; that stretch reads ASYVVPLVWCMACLSSLPTFYF. Residues Arg182, Tyr204, and Lys215 each contribute to the angiotensin II site. Over 182 to 206 the chain is Extracellular; the sequence is RDVRTIEYLGVNACIMAFPPEKYAQ. A helical membrane pass occupies residues 207–232; the sequence is WSAGIALMKNILGFIIPLIFIATCYF. The Cytoplasmic portion of the chain corresponds to 233 to 257; the sequence is GIRKHLLKTNSYGKNRITRDQVLKM. Residues 258 to 281 form a helical membrane-spanning segment; that stretch reads AAAVVLAFIICWLPFHVLTFLDAL. Asp279 lines the angiotensin II pocket. The Extracellular portion of the chain corresponds to 282 to 294; sequence TWMGIINSCEVIA. Residues 295 to 320 form a helical membrane-spanning segment; sequence VIDLALPFAILLGFTNSCVNPFLYCF. Angiotensin II is bound at residue Asp297. Residues 321-363 lie on the Cytoplasmic side of the membrane; sequence VGNRFQQKLRSVFRVPITWLQGKRETMSCRKGSSLREMDTFVS. The tract at residues 324-333 is helix VIII; sequence RFQQKLRSVF. At Ser354 the chain carries Phosphoserine; by PKC.

The protein belongs to the G-protein coupled receptor 1 family. As to quaternary structure, interacts with MTUS1. Expressed at highest levels in adrenal gland and uterus.

It localises to the cell membrane. In terms of biological role, receptor for angiotensin II, a vasoconstricting peptide. Signals primarily via a non-canonical G-protein- and beta-arrestin independent pathways. Cooperates with MTUS1 to inhibit ERK2 activation and cell proliferation. The sequence is that of Type-2 angiotensin II receptor from Mus musculus (Mouse).